Consider the following 251-residue polypeptide: HTH-type transcriptional regulator UlaR (251 aa).

Residues 3–58 (EAQRHQILLEMLAQLGFVTVEKVVERLGISPATARRDINKLDESGKLKKVRNGAEA) enclose the HTH deoR-type domain. Positions 20-39 (VTVEKVVERLGISPATARRD) form a DNA-binding region, H-T-H motif.

It is found in the cytoplasm. Its function is as follows. Represses ulaG and the ulaABCDEF operon. The protein is HTH-type transcriptional regulator UlaR of Escherichia coli O139:H28 (strain E24377A / ETEC).